We begin with the raw amino-acid sequence, 211 residues long: Large ribosomal subunit protein bL25 (211 aa).

Belongs to the bacterial ribosomal protein bL25 family. CTC subfamily. As to quaternary structure, part of the 50S ribosomal subunit; part of the 5S rRNA/L5/L18/L25 subcomplex. Contacts the 5S rRNA. Binds to the 5S rRNA independently of L5 and L18.

Its function is as follows. This is one of the proteins that binds to the 5S RNA in the ribosome where it forms part of the central protuberance. The sequence is that of Large ribosomal subunit protein bL25 from Xanthomonas axonopodis pv. citri (strain 306).